Consider the following 348-residue polypeptide: MTQPMPGKPAEDAENELDIRGLFRTLWAGKLWIIGMGLAFALIALAYTFFARQEWSSTAITDRPTVNMLGGYYSQQQFLRNLDVRSNMASADQPSVMDEAYKEFVMQLASWDTRREFWLQTDYYKQRMVGNSKADAALLDEMINNIQFIPGDFTRAVNDSVKLIAETAPDANNLLRQYVAFASQRAASHLNDELKGAWAARTIQMKAQVKRQEEVAKAIYDRRMNSIEQALKIAEQHNISRSATDVPAEELPDSEMFLLGRPMLQARLENLQAVGPAFDLDYDQNRAMLNTLNVGPTLDPRFQTYRYLRTPEEPVKRDSPRRAFLMIMWGIVGGLIGAGVALTRRCSK.

At 1–30 (MTQPMPGKPAEDAENELDIRGLFRTLWAGK) the chain is on the cytoplasmic side. A helical membrane pass occupies residues 31 to 51 (LWIIGMGLAFALIALAYTFFA). Residues 52 to 322 (RQEWSSTAIT…EPVKRDSPRR (271 aa)) are Periplasmic-facing. Residues 323–343 (AFLMIMWGIVGGLIGAGVALT) traverse the membrane as a helical segment. Residues 344–348 (RRCSK) are Cytoplasmic-facing.

This sequence belongs to the WzzB/Cld/Rol family. In terms of assembly, homooctamer. Probably part of a complex composed of WzxE, WzyE and WzzE.

Its subcellular location is the cell inner membrane. Its pathway is bacterial outer membrane biogenesis; enterobacterial common antigen biosynthesis. In terms of biological role, modulates the polysaccharide chain length of enterobacterial common antigen (ECA). This Escherichia coli O157:H7 protein is ECA polysaccharide chain length modulation protein.